The primary structure comprises 1225 residues: DNA-directed RNA polymerase subunit beta' (1225 aa).

Zn(2+)-binding residues include cysteine 60, cysteine 62, cysteine 75, and cysteine 78. Mg(2+)-binding residues include aspartate 450, aspartate 452, and aspartate 454. Zn(2+) is bound by residues cysteine 818, cysteine 892, cysteine 899, and cysteine 902.

The protein belongs to the RNA polymerase beta' chain family. In terms of assembly, the RNAP catalytic core consists of 2 alpha, 1 beta, 1 beta' and 1 omega subunit. When a sigma factor is associated with the core the holoenzyme is formed, which can initiate transcription. Mg(2+) is required as a cofactor. Requires Zn(2+) as cofactor.

The enzyme catalyses RNA(n) + a ribonucleoside 5'-triphosphate = RNA(n+1) + diphosphate. In terms of biological role, DNA-dependent RNA polymerase catalyzes the transcription of DNA into RNA using the four ribonucleoside triphosphates as substrates. The polypeptide is DNA-directed RNA polymerase subunit beta' (Streptococcus pneumoniae (strain ATCC BAA-255 / R6)).